The primary structure comprises 557 residues: Organic cation/carnitine transporter 2 (557 aa).

Topologically, residues Met-1–Leu-20 are cytoplasmic. The helical transmembrane segment at Ile-21–Phe-41 threads the bilayer. Topologically, residues Leu-42 to Ala-142 are extracellular. N-linked (GlcNAc...) asparagine glycosylation is found at Asn-57, Asn-64, and Asn-91. Residues Pro-143–Leu-163 form a helical membrane-spanning segment. Residues Ser-164–Val-172 lie on the Cytoplasmic side of the membrane. A helical membrane pass occupies residues Leu-173–Phe-193. Topologically, residues Glu-194–Thr-197 are extracellular. Residues Val-198–Gly-218 form a helical membrane-spanning segment. Gly-218–Ser-225 is a binding site for ATP. The Cytoplasmic segment spans residues Thr-219–Thr-232. Residues Leu-233–Ile-253 traverse the membrane as a helical segment. The Extracellular portion of the chain corresponds to Arg-254–Arg-257. The helical transmembrane segment at Met-258–Pro-278 threads the bilayer. Topologically, residues Glu-279–Arg-341 are cytoplasmic. Residues Ile-342–Ser-362 form a helical membrane-spanning segment. Residues Leu-363–Tyr-373 are Extracellular-facing. Residues Val-374 to Leu-394 form a helical membrane-spanning segment. The Cytoplasmic portion of the chain corresponds to Gln-395 to Ala-406. A helical membrane pass occupies residues Leu-407–Leu-427. Over Ser-428 to Ala-430 the chain is Extracellular. The chain crosses the membrane as a helical span at residues Leu-431–Ala-451. The Cytoplasmic portion of the chain corresponds to Glu-452 to Gly-462. Residues Val-463–Leu-483 traverse the membrane as a helical segment. Topologically, residues Gly-484–Arg-488 are extracellular. Tyr-486 is subject to Phosphotyrosine. Residues Phe-489–Phe-509 traverse the membrane as a helical segment. Residues Pro-510–Phe-557 are Cytoplasmic-facing. The disordered stretch occupies residues Ser-537–Phe-557. Ser-548 carries the post-translational modification Phosphoserine. Thr-550 is modified (phosphothreonine).

It belongs to the major facilitator (TC 2.A.1) superfamily. Organic cation transporter (TC 2.A.1.19) family. Interacts with PDZK1. As to expression, expressed in the proximal and distal tubules and in the glomeruli in the kidney, in the myocardium, valves, and arterioles in the heart, in the labyrinthine layer of the placenta, and in the cortex, hippocampus, and cerebellum in the brain. Expressed in Sertoli cells in testis.

Its subcellular location is the cell membrane. The protein localises to the apical cell membrane. It localises to the basal cell membrane. The enzyme catalyses (R)-carnitine(out) + Na(+)(out) = (R)-carnitine(in) + Na(+)(in). It carries out the reaction O-acetyl-(R)-carnitine(out) + Na(+)(out) = O-acetyl-(R)-carnitine(in) + Na(+)(in). The catalysed reaction is O-propanoyl-(R)-carnitine(out) + Na(+)(out) = O-propanoyl-(R)-carnitine(in) + Na(+)(in). It catalyses the reaction glycine betaine(out) + Na(+)(out) = glycine betaine(in) + Na(+)(in). The enzyme catalyses glycine betaine(out) + (R)-carnitine(in) = glycine betaine(in) + (R)-carnitine(out). It carries out the reaction O-butanoyl-(R)-carnitine(out) + Na(+)(out) = O-butanoyl-(R)-carnitine(in) + Na(+)(in). The catalysed reaction is (S)-carnitine(out) + Na(+)(out) = (S)-carnitine(in) + Na(+)(in). It catalyses the reaction an O-acyl-(R)-carnitine(out) + Na(+)(out) = an O-acyl-(R)-carnitine(in) + Na(+)(in). The enzyme catalyses L-glutamyl-L-arginyl-glycyl-L-methionyl-L-threonine(out) + Na(+)(out) = L-glutamyl-L-arginyl-glycyl-L-methionyl-L-threonine(in) + Na(+)(in). It carries out the reaction N,N-dimethylglycine(out) + Na(+)(out) = N,N-dimethylglycine(in) + Na(+)(in). Its activity is regulated as follows. Inhibited by emetine, quinidine and verapamil. The IC(50) of emetine is 4.2 uM. Not inhibited by valproic acid. Transport of (R)-carnitine is stimulated by cholesterol in the plasma membrane. Sodium-ion dependent, high affinity carnitine transporter. Involved in the active cellular uptake of carnitine. Transports one sodium ion with one molecule of carnitine. Also transports organic cations such as tetraethylammonium (TEA) without the involvement of sodium. Also relative uptake activity ratio of carnitine to TEA is 11.3. May also contribute to regulate the transport of organic compounds in testis across the blood-testis-barrier. This Rattus norvegicus (Rat) protein is Organic cation/carnitine transporter 2 (Slc22a5).